The following is a 352-amino-acid chain: Maleylacetate reductase (352 aa).

NAD(+) contacts are provided by residues 93-94 (GS) and 115-119 (TTYAG).

It belongs to the iron-containing alcohol dehydrogenase family. Requires The maleylacetate reductase family of enzymes does not require any metal ion for activity, despite being related to the family III metal-dependent polyol dehydrogenases. as cofactor.

It catalyses the reaction 3-oxoadipate + NAD(+) = maleylacetate + NADH + H(+). The protein operates within xenobiotic degradation; gamma-hexachlorocyclohexane degradation. Its function is as follows. Catalyzes the NADH-dependent reduction of maleylacetate to beta-ketoadipate, a step in the degradation of gamma-hexachlorocyclohexane (gamma-HCH or lindane). Has an essential role in this assimilation pathway that allows S.japonicum UT26 to grow on gamma-HCH as the sole source of carbon and energy. In Sphingobium indicum (strain DSM 16413 / CCM 7287 / MTCC 6362 / UT26 / NBRC 101211 / UT26S) (Sphingobium japonicum), this protein is Maleylacetate reductase.